Consider the following 289-residue polypeptide: 4-diphosphocytidyl-2-C-methyl-D-erythritol kinase (289 aa).

Residue Lys15 is part of the active site. Position 100 to 110 (100 to 110 (PVSAGLAGGSA)) interacts with ATP. Asp140 is a catalytic residue.

It belongs to the GHMP kinase family. IspE subfamily.

It catalyses the reaction 4-CDP-2-C-methyl-D-erythritol + ATP = 4-CDP-2-C-methyl-D-erythritol 2-phosphate + ADP + H(+). It functions in the pathway isoprenoid biosynthesis; isopentenyl diphosphate biosynthesis via DXP pathway; isopentenyl diphosphate from 1-deoxy-D-xylulose 5-phosphate: step 3/6. Catalyzes the phosphorylation of the position 2 hydroxy group of 4-diphosphocytidyl-2C-methyl-D-erythritol. The chain is 4-diphosphocytidyl-2-C-methyl-D-erythritol kinase from Anaplasma marginale (strain Florida).